A 58-amino-acid chain; its full sequence is MSEIKVGENETLESALRRFKKKCARAGVLSEVRKREHYEKPSVKKKKKSEAARKRKFK.

The tract at residues 35-58 (REHYEKPSVKKKKKSEAARKRKFK) is disordered. Residues 43–58 (VKKKKKSEAARKRKFK) are compositionally biased toward basic residues.

The protein belongs to the bacterial ribosomal protein bS21 family.

The sequence is that of Small ribosomal subunit protein bS21 from Clostridium botulinum (strain Alaska E43 / Type E3).